A 161-amino-acid chain; its full sequence is SsrA-binding protein (161 aa).

This sequence belongs to the SmpB family.

It localises to the cytoplasm. In terms of biological role, required for rescue of stalled ribosomes mediated by trans-translation. Binds to transfer-messenger RNA (tmRNA), required for stable association of tmRNA with ribosomes. tmRNA and SmpB together mimic tRNA shape, replacing the anticodon stem-loop with SmpB. tmRNA is encoded by the ssrA gene; the 2 termini fold to resemble tRNA(Ala) and it encodes a 'tag peptide', a short internal open reading frame. During trans-translation Ala-aminoacylated tmRNA acts like a tRNA, entering the A-site of stalled ribosomes, displacing the stalled mRNA. The ribosome then switches to translate the ORF on the tmRNA; the nascent peptide is terminated with the 'tag peptide' encoded by the tmRNA and targeted for degradation. The ribosome is freed to recommence translation, which seems to be the essential function of trans-translation. The protein is SsrA-binding protein of Mycolicibacterium smegmatis (strain ATCC 700084 / mc(2)155) (Mycobacterium smegmatis).